Here is a 435-residue protein sequence, read N- to C-terminus: Zinc finger CCCH domain-containing protein 16 (435 aa).

The segment at 1–27 adopts a C3H1-type zinc-finger fold; it reads MRKELCRNFQRGSCRYGENCRFLHPQQ. Positions 2-88 are 6 X 2 AA repeats of F-G; sequence RKELCRNFQR…ASTPTGGGAA (87 aa). Disordered regions lie at residues 25-105 and 205-374; these read PQQA…DHKC and TPSI…SQNN. 2 consecutive repeat copies span residues 34-35 and 36-37. Positions 39–51 are enriched in low complexity; sequence QNQQQQQQQQQQN. 2 repeat units span residues 56 to 57 and 58 to 59. The span at 63-77 shows a compositional bias: polar residues; it reads GGSSRPNQFQNTWSR. A compositionally biased stretch (low complexity) spans 78–99; the sequence is TASTPTGGGAAASTQQTGKQTQ. Polar residues-rich tracts occupy residues 205–320 and 328–339; these read TPSI…VNTP and SGFQTNPSTTFK. Tandem repeats lie at residues 343–344 and 359–360. Polar residues predominate over residues 351 to 374; the sequence is TTPQNNNIFGQSTPTPATNTSQNN.

As to quaternary structure, part of the nuclear pore complex (NPC). The NPC has an eight-fold symmetrical structure comprising a central transport channel and two rings, the cytoplasmic and nuclear rings, to which eight filaments are attached. The cytoplasmic filaments have loose ends, while the nuclear filaments are joined in a distal ring, forming a nuclear basket. NPCs are highly dynamic in configuration and composition, and can be devided in 3 subcomplexes, the NUP62 subcomplex, the NUP107-160 subcomplex and the NUP93 subcomplex, containing approximately 30 different nucleoporin proteins.

It localises to the nucleus envelope. It is found in the nucleus. Its subcellular location is the nuclear pore complex. The sequence is that of Zinc finger CCCH domain-containing protein 16 from Arabidopsis thaliana (Mouse-ear cress).